Here is a 353-residue protein sequence, read N- to C-terminus: Phospho-N-acetylmuramoyl-pentapeptide-transferase (353 aa).

Transmembrane regions (helical) follow at residues 22-42, 65-85, 88-108, 129-149, 161-181, 192-212, 228-248, 256-276, 281-301, and 330-350; these read FAFF…ITWA, TPTM…LFCI, DNIF…IGLI, LLAQ…SSEL, PLFD…ISSS, GLAT…LYLS, GLGE…GFLW, VFMG…LAII, ILLL…ILQV, and KIIV…LASI.

Belongs to the glycosyltransferase 4 family. MraY subfamily. The cofactor is Mg(2+).

The protein localises to the cell inner membrane. It carries out the reaction UDP-N-acetyl-alpha-D-muramoyl-L-alanyl-gamma-D-glutamyl-meso-2,6-diaminopimeloyl-D-alanyl-D-alanine + di-trans,octa-cis-undecaprenyl phosphate = di-trans,octa-cis-undecaprenyl diphospho-N-acetyl-alpha-D-muramoyl-L-alanyl-D-glutamyl-meso-2,6-diaminopimeloyl-D-alanyl-D-alanine + UMP. It functions in the pathway cell wall biogenesis; peptidoglycan biosynthesis. Catalyzes the initial step of the lipid cycle reactions in the biosynthesis of the cell wall peptidoglycan: transfers peptidoglycan precursor phospho-MurNAc-pentapeptide from UDP-MurNAc-pentapeptide onto the lipid carrier undecaprenyl phosphate, yielding undecaprenyl-pyrophosphoryl-MurNAc-pentapeptide, known as lipid I. The chain is Phospho-N-acetylmuramoyl-pentapeptide-transferase from Campylobacter jejuni subsp. jejuni serotype O:6 (strain 81116 / NCTC 11828).